Consider the following 367-residue polypeptide: Glutamate 5-kinase (367 aa).

K10 contributes to the ATP binding site. Residues S50, D137, and N149 each coordinate substrate. Residues 169 to 170 and 211 to 217 each bind ATP; these read TD and TGGMSTK. A PUA domain is found at 275–353; sequence AGEITVDEGA…QQIDAILGYE (79 aa).

The protein belongs to the glutamate 5-kinase family.

It localises to the cytoplasm. It carries out the reaction L-glutamate + ATP = L-glutamyl 5-phosphate + ADP. It participates in amino-acid biosynthesis; L-proline biosynthesis; L-glutamate 5-semialdehyde from L-glutamate: step 1/2. Functionally, catalyzes the transfer of a phosphate group to glutamate to form L-glutamate 5-phosphate. The polypeptide is Glutamate 5-kinase (Salmonella paratyphi A (strain ATCC 9150 / SARB42)).